We begin with the raw amino-acid sequence, 498 residues long: Calcitonin receptor (498 aa).

The N-terminal stretch at Met-1–Gly-29 is a signal peptide. Residues Ala-30–Tyr-147 lie on the Extracellular side of the membrane. 3 disulfides stabilise this stretch: Cys-56-Cys-82, Cys-73-Cys-113, and Cys-96-Cys-135. N-linked (GlcNAc...) asparagine glycans are attached at residues Asn-74, Asn-126, and Asn-131. Residues Ile-148–Ile-170 traverse the membrane as a helical segment. The Cytoplasmic portion of the chain corresponds to Phe-171 to Val-198. A helical transmembrane segment spans residues Thr-199–Leu-219. Residues Val-220–Cys-236 are Extracellular-facing. Cys-236 and Cys-306 are joined by a disulfide. A helical transmembrane segment spans residues Lys-237 to Val-259. Topologically, residues Tyr-260 to Leu-276 are cytoplasmic. A helical membrane pass occupies residues Trp-277–Thr-297. The Extracellular segment spans residues Arg-298 to Asn-313. Residues Leu-314–Leu-337 form a helical membrane-spanning segment. Topologically, residues Arg-338–Lys-357 are cytoplasmic. The chain crosses the membrane as a helical span at residues Ala-358–Leu-376. Over Pro-377–Leu-384 the chain is Extracellular. A helical membrane pass occupies residues Leu-385–Cys-411. Over Asn-412 to Ala-498 the chain is Cytoplasmic.

It belongs to the G-protein coupled receptor 2 family. In terms of assembly, heterodimer of CALCR and RAMP1, RAMP2 or RAMP3; the receptor complexes function as AMYR1, AMYR2 and AMYR3 receptors, respectively, and respond to amylin/IAPP, calcitonin/CT and CGRP1 ligands. Interacts with GPRASP2.

The protein localises to the cell membrane. In terms of biological role, g protein-coupled receptor activated by ligand peptides amylin (IAPP), calcitonin (CT/CALCA) and calcitonin gene-related peptide type 1 (CGRP1/CALCA). CALCR interacts with receptor-activity-modifying proteins RAMP1, 2 and 3 to form receptor complexes AMYR1, 2 and 3, respectively. IAPP, CT and CGRP1 activate CALCR and AMYRs with distinct modes of receptor activation resulting in specific phenotypes. Ligand binding causes a conformation change that triggers signaling via guanine nucleotide-binding proteins (G proteins) and modulates the activity of downstream effectors. Activates cAMP-dependent pathway. The chain is Calcitonin receptor from Sus scrofa (Pig).